Here is a 90-residue protein sequence, read N- to C-terminus: DNA-directed RNA polymerase subunit omega (90 aa).

The tract at residues 69-90 (RQEQQEQEAAELAAVSSIAHTR) is disordered.

It belongs to the RNA polymerase subunit omega family. As to quaternary structure, the RNAP catalytic core consists of 2 alpha, 1 beta, 1 beta' and 1 omega subunit. When a sigma factor is associated with the core the holoenzyme is formed, which can initiate transcription.

It catalyses the reaction RNA(n) + a ribonucleoside 5'-triphosphate = RNA(n+1) + diphosphate. Promotes RNA polymerase assembly. Latches the N- and C-terminal regions of the beta' subunit thereby facilitating its interaction with the beta and alpha subunits. The sequence is that of DNA-directed RNA polymerase subunit omega from Vibrio atlanticus (strain LGP32) (Vibrio splendidus (strain Mel32)).